A 615-amino-acid polypeptide reads, in one-letter code: Melanopsin-B (615 aa).

Residues 1-19 lie on the Extracellular side of the membrane; the sequence is MDMDRGFYRKVDVPDHAHY. The helical transmembrane segment at 20–40 threads the bilayer; sequence VIAFFVLIIGVVGVTGNALVM. Residues 41–56 lie on the Cytoplasmic side of the membrane; sequence YAFLCNKKLRTPPNYF. Residues 57 to 77 form a helical membrane-spanning segment; sequence IMNLAVSDFLMAITQSPIFFI. Residues 78–93 are Extracellular-facing; that stretch reads NSLFKEWIFGETGCRM. Cys91 and Cys169 are oxidised to a cystine. Residues 94-114 traverse the membrane as a helical segment; that stretch reads YAFCGALFGITSMINLLAISL. Topologically, residues 115-136 are cytoplasmic; the sequence is DRYIVITKPPQAIRWVSGRRTM. The chain crosses the membrane as a helical span at residues 137–157; that stretch reads VVILLVWLYSLAWSLAPLLGW. Residues 158–189 lie on the Extracellular side of the membrane; the sequence is SSYIPEGLMTSCTWDYVTSTPANKGYTLMLCC. Residues 190 to 210 traverse the membrane as a helical segment; sequence FVFFIPLGIISYCYLCMFLAI. At 211–244 the chain is on the cytoplasmic side; sequence RSAGREIERLGTQVRKSTLMQQQTIKTEWKLTKV. The chain crosses the membrane as a helical span at residues 245-265; the sequence is AFVVIIVYVHSWSPYACVTLI. Residues 266–279 are Extracellular-facing; that stretch reads AWAGYGSHLSPYSK. Residues 280 to 300 traverse the membrane as a helical segment; the sequence is AVPAVIAKASAIYNPFIYAII. At Lys287 the chain carries N6-(retinylidene)lysine. The Cytoplasmic portion of the chain corresponds to 301 to 615; sequence HSKYRDTLAE…RNLEESFMAL (315 aa). Disordered stretches follow at residues 390 to 420 and 465 to 502; these read LGRSKEHRGPPAQQNRQTRSSDTLEQATVAD and NKHPNNNHKNHNNRHNGNNNNEEHEYSGKGGRHCQNHP. Polar residues predominate over residues 401 to 415; sequence AQQNRQTRSSDTLEQ. Residues 469–478 show a composition bias toward basic residues; sequence NNNHKNHNNR.

It belongs to the G-protein coupled receptor 1 family. Opsin subfamily. Expressed in the inner nuclear layer of the retina, possibly in amacrine and ganglion cells. Expressed in a subpopulation of neurons in the dorsal habenula.

Its subcellular location is the cell membrane. Functionally, photoreceptor implicated in non-image-forming responses to light. This is Melanopsin-B (opn4b) from Gadus morhua (Atlantic cod).